An 85-amino-acid chain; its full sequence is Small ribosomal subunit protein bS18c (85 aa).

The protein belongs to the bacterial ribosomal protein bS18 family. Part of the 30S ribosomal subunit.

It localises to the plastid. The protein resides in the chloroplast. This is Small ribosomal subunit protein bS18c from Tupiella akineta (Green alga).